The sequence spans 156 residues: D-aminoacyl-tRNA deacylase (156 aa).

A Gly-cisPro motif, important for rejection of L-amino acids motif is present at residues 142-143 (GP).

It belongs to the DTD family. Homodimer.

The protein resides in the cytoplasm. The catalysed reaction is glycyl-tRNA(Ala) + H2O = tRNA(Ala) + glycine + H(+). It carries out the reaction a D-aminoacyl-tRNA + H2O = a tRNA + a D-alpha-amino acid + H(+). An aminoacyl-tRNA editing enzyme that deacylates mischarged D-aminoacyl-tRNAs. Also deacylates mischarged glycyl-tRNA(Ala), protecting cells against glycine mischarging by AlaRS. Acts via tRNA-based rather than protein-based catalysis; rejects L-amino acids rather than detecting D-amino acids in the active site. By recycling D-aminoacyl-tRNA to D-amino acids and free tRNA molecules, this enzyme counteracts the toxicity associated with the formation of D-aminoacyl-tRNA entities in vivo and helps enforce protein L-homochirality. The chain is D-aminoacyl-tRNA deacylase from Delftia acidovorans (strain DSM 14801 / SPH-1).